Consider the following 238-residue polypeptide: MRPSGRTPEQPRDVRITRNYTRHAEGSVLVEFGDTKVICTASVENKVPPFLRGEGKGWITAEYGMLPRSTGSRMGREAARGKQGGRTVEIQRLIGRSLRAAVDLEALGEHTITIDCDVIQADGGTRTAAITGGCVALVDALNHLVKEKRLKKSPLKQMVAAVSVGVYRGTPVADLDYPEDSEAETDMNVIMTDQGGFIEIQGTAEGAPFEQAELDAMLALARKAIDQLFELQKEALSA.

Phosphate-binding positions include Arg-86 and 124-126 (GTR).

The protein belongs to the RNase PH family. In terms of assembly, homohexameric ring arranged as a trimer of dimers.

The enzyme catalyses tRNA(n+1) + phosphate = tRNA(n) + a ribonucleoside 5'-diphosphate. Its function is as follows. Phosphorolytic 3'-5' exoribonuclease that plays an important role in tRNA 3'-end maturation. Removes nucleotide residues following the 3'-CCA terminus of tRNAs; can also add nucleotides to the ends of RNA molecules by using nucleoside diphosphates as substrates, but this may not be physiologically important. Probably plays a role in initiation of 16S rRNA degradation (leading to ribosome degradation) during starvation. This chain is Ribonuclease PH, found in Marinobacter nauticus (strain ATCC 700491 / DSM 11845 / VT8) (Marinobacter aquaeolei).